Consider the following 905-residue polypeptide: Cadherin-2B (905 aa).

The N-terminal stretch at 1–28 is a signal peptide; it reads MCRKQPFLLPTLLGILAALMLQQGPVEA. Residues 29 to 160 constitute a propeptide that is removed on maturation; the sequence is FGGSRLCKTG…NSNGLQRQKR (132 aa). Cadherin domains lie at 161-268, 269-383, 384-498, 499-604, and 605-713; these read DWVI…RPEF, LHQI…PPEF, TAMT…NPYF, TPNP…DNAP, and YVYP…TTAP. Residues 161 to 723 lie on the Extracellular side of the membrane; it reads DWVIPPINVP…IIGTGLGTGA (563 aa). A Ca(2+)-binding site is contributed by Glu-171. Residue Asn-191 is glycosylated (N-linked (GlcNAc...) asparagine). 7 residues coordinate Ca(2+): Asp-227, Glu-229, Asp-260, Met-261, Asn-262, Asp-263, and Asn-264. A glycan (N-linked (GlcNAc...) asparagine) is linked at Asn-274. Asp-294, Asp-296, and Asn-302 together coordinate Ca(2+). N-linked (GlcNAc...) asparagine glycosylation occurs at Asn-326. Asp-354 contributes to the Ca(2+) binding site. N-linked (GlcNAc...) asparagine glycosylation is found at Asn-403, Asn-573, Asn-623, Asn-651, and Asn-692. Residues 724–745 traverse the membrane as a helical segment; the sequence is IIAILLCIIILLTLVLMFVVWM. Residues 746 to 905 are Cytoplasmic-facing; that stretch reads KRRDKERQAK…LADMYGGSDD (160 aa). 2 disordered regions span residues 774–800 and 862–883; these read EEGGGEEDQDYDLSQLQQPDTMEPDTI and SGSTAGSLSSLNSSSSGGEQDY. Over residues 775–784 the composition is skewed to acidic residues; that stretch reads EGGGEEDQDY. Positions 862–879 are enriched in low complexity; it reads SGSTAGSLSSLNSSSSGG.

As to quaternary structure, homodimer (via extracellular region). Can also form heterodimers with other cadherins (via extracellular region). Dimerization occurs in trans, i.e. with a cadherin chain from another cell.

It localises to the cell membrane. It is found in the sarcolemma. Its subcellular location is the cell junction. The protein resides in the cell surface. The protein localises to the desmosome. It localises to the adherens junction. Calcium-dependent cell adhesion protein; preferentially mediates homotypic cell-cell adhesion. Cadherins may thus contribute to the sorting of heterogeneous cell types, and thereby play an important role during embryonic development. Required for proper neurite branching. Required for pre- and postsynaptic organization. The protein is Cadherin-2B (cdh2-b) of Xenopus laevis (African clawed frog).